Here is a 118-residue protein sequence, read N- to C-terminus: Small ribosomal subunit protein uS13 (118 aa).

Residues 94–118 form a disordered region; the sequence is SLPLRGQRTKTNARTRKGPRKPIKK.

Belongs to the universal ribosomal protein uS13 family. Part of the 30S ribosomal subunit. Forms a loose heterodimer with protein S19. Forms two bridges to the 50S subunit in the 70S ribosome.

In terms of biological role, located at the top of the head of the 30S subunit, it contacts several helices of the 16S rRNA. In the 70S ribosome it contacts the 23S rRNA (bridge B1a) and protein L5 of the 50S subunit (bridge B1b), connecting the 2 subunits; these bridges are implicated in subunit movement. Contacts the tRNAs in the A and P-sites. The sequence is that of Small ribosomal subunit protein uS13 from Aliivibrio fischeri (strain ATCC 700601 / ES114) (Vibrio fischeri).